We begin with the raw amino-acid sequence, 459 residues long: tRNA uridine(34) acetyltransferase (459 aa).

The segment at 1 to 278 is radical S-adenosyl-L-methionine (rSAM); sequence MKKLSRTISG…VPPYVRISRV (278 aa). The Radical SAM core domain maps to 6-271; that stretch reads RTISGVTPVA…IADIKALVPP (266 aa). [4Fe-4S] cluster-binding residues include cysteine 23, cysteine 27, and cysteine 30. Lysine 77 contacts acetyl-CoA. Residues 308–459 are N-acetyltransferase; sequence QKCRCIRCRE…VAGYMCKHLD (152 aa). Residues cysteine 310, cysteine 312, and cysteine 315 each coordinate Zn(2+). Acetyl-CoA contacts are provided by residues 386-389, 409-411, and tyrosine 442; these read ELHV and LGR.

This sequence belongs to the ELP3 family. As to quaternary structure, homodimer. It depends on [4Fe-4S] cluster as a cofactor.

The catalysed reaction is uridine(34) in tRNA + acetyl-CoA + S-adenosyl-L-methionine + H2O = 5-(carboxymethyl)uridine(34) in tRNA + 5'-deoxyadenosine + L-methionine + CoA + 2 H(+). The protein operates within tRNA modification. Functionally, tRNA uridine(34) acetyltransferase, which mediates formation of carboxymethyluridine in the wobble base at position 34 in tRNAs. The proposed mechanism is the following: (i) recruits S-adenosyl-L-methionine and cleaves it to generate a 5'-deoxyadenosine radical (5'-dA) in the radical S-adenosyl-L-methionine (rSAM) region, (ii) hydrolyzes acetyl-CoA in the N-acetyltransferase domain and (iii) an acetyl radical is formed by the products of the two domains and (iv) is transferred onto the C5 position of uridine(34) in the bound tRNA molecule. Does not show protein lysine acetyltransferase activity. The chain is tRNA uridine(34) acetyltransferase from Dehalococcoides mccartyi (strain CBDB1).